We begin with the raw amino-acid sequence, 164 residues long: Outer membrane protein assembly factor BamE (164 aa).

The signal sequence occupies residues 1–19 (MHAFFPRLLLLLLFLPLTH). The tract at residues 111 to 164 (PAFSESEPAQNFFSPEQTFTPAPDTDSNMNEEPDKKGTVNFLKENQTNFYKDNQ) is disordered. 2 stretches are compositionally biased toward polar residues: residues 117–140 (EPAQ…SNMN) and 153–164 (KENQTNFYKDNQ).

Belongs to the BamE family. Part of the Bam complex.

It localises to the cell outer membrane. Its function is as follows. Part of the outer membrane protein assembly complex, which is involved in assembly and insertion of beta-barrel proteins into the outer membrane. The sequence is that of Outer membrane protein assembly factor BamE from Nitrosomonas europaea (strain ATCC 19718 / CIP 103999 / KCTC 2705 / NBRC 14298).